Reading from the N-terminus, the 284-residue chain is L-ribulose-5-phosphate 3-epimerase UlaE (284 aa).

The protein belongs to the L-ribulose-5-phosphate 3-epimerase family.

It carries out the reaction L-ribulose 5-phosphate = L-xylulose 5-phosphate. It functions in the pathway cofactor degradation; L-ascorbate degradation; D-xylulose 5-phosphate from L-ascorbate: step 3/4. Functionally, catalyzes the isomerization of L-xylulose-5-phosphate to L-ribulose-5-phosphate. Is involved in the anaerobic L-ascorbate utilization. The protein is L-ribulose-5-phosphate 3-epimerase UlaE of Shigella flexneri serotype 5b (strain 8401).